The primary structure comprises 220 residues: MNVKIESSWQQRLQEEFDKPYFEKLVNFVKNEYGKAHILPPGHQIFHVFNSCPFQNVKVVILGQDPYPNPGQYYGICFSVPDGVAIPGSLSNIFKEIHQDLGKPIPNSGNLDRWVKQGVFPMNSVLTVRAHETGSHRNIGWETFTDAVIKKLSEERENLVFMLWGSYAKEKASLIDTDKHLILTAVHPSPRSADYGFFGCKHFSKANTFLRSRGIEEIDW.

Residue D65 is the Proton acceptor of the active site.

Belongs to the uracil-DNA glycosylase (UDG) superfamily. UNG family.

The protein localises to the cytoplasm. The enzyme catalyses Hydrolyzes single-stranded DNA or mismatched double-stranded DNA and polynucleotides, releasing free uracil.. Excises uracil residues from the DNA which can arise as a result of misincorporation of dUMP residues by DNA polymerase or due to deamination of cytosine. The sequence is that of Uracil-DNA glycosylase 1 from Bacteroides fragilis (strain YCH46).